A 504-amino-acid polypeptide reads, in one-letter code: Deoxyguanosinetriphosphate triphosphohydrolase (504 aa).

Positions 66 to 273 constitute an HD domain; the sequence is RLTHSMEVQQ…MEAADDISYC (208 aa).

This sequence belongs to the dGTPase family. Type 1 subfamily. Homotetramer. It depends on Mg(2+) as a cofactor.

The catalysed reaction is dGTP + H2O = 2'-deoxyguanosine + triphosphate + H(+). DGTPase preferentially hydrolyzes dGTP over the other canonical NTPs. This Enterobacter sp. (strain 638) protein is Deoxyguanosinetriphosphate triphosphohydrolase.